Consider the following 637-residue polypeptide: MAAMAVGGAGGSRVSSGRDLNCVPEIADTLGAVAKQGFDFLCMPVFHPRFKRESIQEPAKNRPGPQTRSDLLLSGRDWNTLIVGKLSPWIRPDSKVEKIRRNSEAAMLQELNFGAYLGLPAFLLPLNQEDNTNLARVLTNHIHTGHHSSMFWMRVPLVAPEDLRDDIIENAPTTHTEEYSGEEKTWMWWHNFRTLCDYSKRIAVALEIGADLPSNHVIDRWLGEPIKAAILPTSIFLTNKKGFPVLSKMHQRLIFRLLKLEVQFIITGTNHHSEKEFCSYLQYLEYLSQNRPPPNAYELFAKGYEDYLQSPLQPLMDNLESQTYEVFEKDPIKYSQYQQAIYKCLLGRVPEEEKDTNVQVLMVLGAGRGPLVNASLRAAKQADRRIKLYAVEKNPNAVVTLENWQFEEWGSQVTVVSSDMREWVAPEKADIIVSELLGSFADNELSPECLDGAQHFLKDDGVSIPGEYTSFLAPISSSKLYNEVRACREKDRDPEAQFEMPYVVRLHNFHQLSAPQPCFTFSHPNRDPMIDNNRYCTLEFPVEVNTVLHGFAGYFETVLYQDITLSIRPETHSPGMFSWFPILFPIKQPITVREGQTICVRFWRCSNSKKVWYEWAVTAPVCSAIHNPTGRSYTIGL.

A2 is modified (N-acetylalanine). Residues 13–292 (RVSSGRDLNC…YLEYLSQNRP (280 aa)) form a TIM barrel region. Positions 308 to 615 (LQSPLQPLMD…SNSKKVWYEW (308 aa)) constitute an SAM-dependent MTase PRMT-type domain. Y324 is a binding site for S-adenosyl-L-methionine. Residue F327 coordinates a protein. S-adenosyl-L-methionine-binding positions include 333–334 (KY), E392, and 419–420 (DM). 2 residues coordinate a protein: E435 and E444. Catalysis depends on proton donor/acceptor residues E435 and E444. The segment at 465-637 (PGEYTSFLAP…PTGRSYTIGL (173 aa)) is beta barrel. The interval 488-494 (REKDRDP) is dimerization.

Belongs to the class I-like SAM-binding methyltransferase superfamily. Protein arginine N-methyltransferase family. Forms, at least, homodimers and homotetramers. Component of the methylosome complex, composed of PRMT5, WDR77 and CLNS1A. Found in a complex composed of PRMT5, WDR77 and RIOK1. RIOK1 and CLNS1A associate with PRMT5 in a mutually exclusive fashion, which allows the recruitment of distinct methylation substrates, such as nucleolin/NCL and Sm proteins, respectively. Interacts with PRDM1. Identified in a complex composed of methylosome and PRMT1 and ERH. Interacts with EGFR; methylates EGFR and stimulates EGFR-mediated ERK activation. Interacts with HOXA9. Interacts with SRGAP2. Found in a complex with COPRS, RUNX1 and CBFB. Interacts with CHTOP; the interaction symmetrically methylates CHTOP, but seems to require the presence of PRMT1. Interacts with EPB41L3; this modulates methylation of target proteins. Component of a high molecular weight E2F-pocket protein complex, CERC (cyclin E1 repressor complex). Associates with SWI/SNF remodeling complexes containing SMARCA2 and SMARCA4. Interacts with JAK2, SSTR1, SUPT5H, BRAF and with active RAF1. Interacts with LSM11, PRMT7 and SNRPD3. Interacts with COPRS; promoting its recruitment on histone H4. Interacts with CLNS1A/pICln. Identified in a complex with CLNS1A/pICln and Sm proteins. Interacts with RPS10. Interacts with WDR77. Interacts with IWS1. Interacts with CRY1. Interacts with POLR2A. Interacts with SMN1/SMN2. Interacts with LYAR; this interaction is direct. Interacts with TTC5/STRAP; this interaction is DNA damage-dependent and promotes PRMT5 interaction with p53/TP53. Interacts with p53/TP53 in response to DNA damage; the interaction is TTC5/STRAP dependent. Interacts with FAM47E; the interaction is direct, promotes PRMT5 localization to chromatin, and does not disrupt its association with WDR77 or STUB1. Interacts with TDRD6. Interacts with STUB1. Interacts with MBD2. Does not interact with MBD3.

It localises to the cytoplasm. The protein localises to the nucleus. It is found in the golgi apparatus. The enzyme catalyses L-arginyl-[protein] + 2 S-adenosyl-L-methionine = N(omega),N(omega)'-dimethyl-L-arginyl-[protein] + 2 S-adenosyl-L-homocysteine + 2 H(+). Activity is increased by EGF, HGF, FGF1 or FGF2 treatments, and slightly decreased by NGF treatment. Arginine methyltransferase that can both catalyze the formation of omega-N monomethylarginine (MMA) and symmetrical dimethylarginine (sDMA), with a preference for the formation of MMA. Specifically mediates the symmetrical dimethylation of arginine residues in the small nuclear ribonucleoproteins Sm D1 (SNRPD1) and Sm D3 (SNRPD3); such methylation being required for the assembly and biogenesis of snRNP core particles. Methylates SUPT5H and may regulate its transcriptional elongation properties. May methylate the N-terminal region of MBD2. Mono- and dimethylates arginine residues of myelin basic protein (MBP) in vitro. May play a role in cytokine-activated transduction pathways. Negatively regulates cyclin E1 promoter activity and cellular proliferation. Methylates histone H2A and H4 'Arg-3' during germ cell development. Methylates histone H3 'Arg-8', which may repress transcription. Methylates the Piwi proteins (PIWIL1, PIWIL2 and PIWIL4), methylation of Piwi proteins being required for the interaction with Tudor domain-containing proteins and subsequent localization to the meiotic nuage. Methylates RPS10. Attenuates EGF signaling through the MAPK1/MAPK3 pathway acting at 2 levels. First, monomethylates EGFR; this enhances EGFR 'Tyr-1197' phosphorylation and PTPN6 recruitment, eventually leading to reduced SOS1 phosphorylation. Second, methylates RAF1 and probably BRAF, hence destabilizing these 2 signaling proteins and reducing their catalytic activity. Required for induction of E-selectin and VCAM-1, on the endothelial cells surface at sites of inflammation. Methylates HOXA9. Methylates and regulates SRGAP2 which is involved in cell migration and differentiation. Acts as a transcriptional corepressor in CRY1-mediated repression of the core circadian component PER1 by regulating the H4R3 dimethylation at the PER1 promoter. Methylates GM130/GOLGA2, regulating Golgi ribbon formation. Methylates H4R3 in genes involved in glioblastomagenesis in a CHTOP- and/or TET1-dependent manner. Symmetrically methylates POLR2A, a modification that allows the recruitment to POLR2A of proteins including SMN1/SMN2 and SETX. This is required for resolving RNA-DNA hybrids created by RNA polymerase II, that form R-loop in transcription terminal regions, an important step in proper transcription termination. Along with LYAR, binds the promoter of gamma-globin HBG1/HBG2 and represses its expression. Symmetrically methylates NCL. Methylates p53/TP53; methylation might possibly affect p53/TP53 target gene specificity. Involved in spliceosome maturation and mRNA splicing in prophase I spermatocytes through the catalysis of the symmetrical arginine dimethylation of SNRPB (small nuclear ribonucleoprotein-associated protein) and the interaction with tudor domain-containing protein TDRD6. The sequence is that of Protein arginine N-methyltransferase 5 (PRMT5) from Macaca fascicularis (Crab-eating macaque).